The chain runs to 70 residues: Large ribosomal subunit protein uL29 (70 aa).

It belongs to the universal ribosomal protein uL29 family.

The protein is Large ribosomal subunit protein uL29 of Prochlorococcus marinus (strain NATL1A).